The following is a 305-amino-acid chain: Phosphoribosylaminoimidazole-succinocarboxamide synthase (305 aa).

Belongs to the SAICAR synthetase family.

It catalyses the reaction 5-amino-1-(5-phospho-D-ribosyl)imidazole-4-carboxylate + L-aspartate + ATP = (2S)-2-[5-amino-1-(5-phospho-beta-D-ribosyl)imidazole-4-carboxamido]succinate + ADP + phosphate + 2 H(+). Its pathway is purine metabolism; IMP biosynthesis via de novo pathway; 5-amino-1-(5-phospho-D-ribosyl)imidazole-4-carboxamide from 5-amino-1-(5-phospho-D-ribosyl)imidazole-4-carboxylate: step 1/2. The sequence is that of Phosphoribosylaminoimidazole-succinocarboxamide synthase from Tropheryma whipplei (strain Twist) (Whipple's bacillus).